We begin with the raw amino-acid sequence, 262 residues long: Tropinone reductase homolog At2g29310 (262 aa).

Position 13–37 (13–37 (LVTGAASGIGYAIVEELASFGAIIH)) interacts with NADP(+). S146 provides a ligand contact to substrate. Y159 acts as the Proton acceptor in catalysis.

The protein belongs to the short-chain dehydrogenases/reductases (SDR) family. SDR65C subfamily.

This chain is Tropinone reductase homolog At2g29310, found in Arabidopsis thaliana (Mouse-ear cress).